The sequence spans 551 residues: Tetrachloroethene reductive dehalogenase (551 aa).

Residues 1–39 constitute a signal peptide (tat-type signal); the sequence is MGEINRRNFLKASMLGAAAAAVASASVVKGVVSPLVADA. In terms of domain architecture, 4Fe-4S ferredoxin-type 1 spans 411-440; that stretch reads PRKFGVREFCRLCKKCADACPAQAISHEKD. 8 residues coordinate [4Fe-4S] cluster: Cys420, Cys423, Cys426, Cys430, Cys467, Cys478, Cys481, and Cys485. Residues 478 to 496 enclose the 4Fe-4S ferredoxin-type 2 domain; sequence CSNCVAVCSWNKVETWNHD.

It belongs to the PceA family. The cofactor is [4Fe-4S] cluster. Corrinoid is required as a cofactor. Predicted to be exported by the Tat system. The position of the signal peptide cleavage has been experimentally proven.

It is found in the cell membrane. It catalyses the reaction trichloroethene + chloride + A + H(+) = tetrachloroethene + AH2. The catalysed reaction is trichloroethene + AH2 = (Z)-1,2-dichloroethene + chloride + A + H(+). Catalyzes the reductive dechlorination of tetrachloroethene (PCE) to trichloroethene (TCE) and of trichloroethene to cis-1,2-dichloroethene (DCE). Reduced methyl viologen can act as the artificial electron donor. The protein is Tetrachloroethene reductive dehalogenase of Desulfitobacterium hafniense (Desulfitobacterium frappieri).